Reading from the N-terminus, the 150-residue chain is MKTRRQMKIQEIINNQVIHTQEELAELLRKAGFDVTQATVSRDIKEMGLIKVPTSEDDYRYAVPGTAQPLSTPDRLKRRLRETVVTVNDSENLVVLRTIPGNAQALASLIDHSNWEEVIGTVAGDDTILLVVKPAGAVPSVRERIAKLMQ.

It belongs to the ArgR family.

It is found in the cytoplasm. Its pathway is amino-acid biosynthesis; L-arginine biosynthesis [regulation]. In terms of biological role, regulates arginine biosynthesis genes. The polypeptide is Arginine repressor (Desulfitobacterium hafniense (strain DSM 10664 / DCB-2)).